The primary structure comprises 83 residues: Beta-toxin Ct7 (83 aa).

An N-terminal signal peptide occupies residues 1–18 (MKVLILIIASVLLIGVEC). In terms of domain architecture, LCN-type CS-alpha/beta spans 19-81 (KDGYPMNSEG…VWDSATNKCG (63 aa)). Cystine bridges form between Cys-29-Cys-80, Cys-33-Cys-54, Cys-40-Cys-61, and Cys-44-Cys-63. Gly-81 carries the post-translational modification Glycine amide. Gly-82 is a propeptide.

This sequence belongs to the long (4 C-C) scorpion toxin superfamily. Sodium channel inhibitor family. Beta subfamily. As to expression, expressed by the venom gland.

Its subcellular location is the secreted. Its function is as follows. Beta toxins bind voltage-independently at site-4 of sodium channels (Nav) and shift the voltage of activation toward more negative potentials thereby affecting sodium channel activation and promoting spontaneous and repetitive firing. Is possibly toxic to mice, freshwater shrimp and crickets. The sequence is that of Beta-toxin Ct7 from Centruroides tecomanus (Scorpion).